The chain runs to 875 residues: Serine/threonine-protein kinase ATG1 (875 aa).

The Protein kinase domain maps to 22 to 318 (YSIGPEIGKG…FNEFFNDPLI (297 aa)). ATP contacts are provided by residues 28 to 36 (IGKGSFATV) and Lys51. Residue Asp168 is the Proton acceptor of the active site. Basic and acidic residues predominate over residues 367–379 (EKSKQDLPAREVS). Disordered regions lie at residues 367-422 (EKSK…QPHN) and 470-515 (INPR…DRRI). Over residues 380–389 (THASESQTKA) the composition is skewed to polar residues. The span at 390–405 (VDTRPSSRDEEIKEII) shows a compositional bias: basic and acidic residues. Composition is skewed to polar residues over residues 406–420 (NKNS…SIQP), 473–490 (RRTS…NNMQ), and 497–508 (LRSNSSGSQRRP).

It belongs to the protein kinase superfamily. Ser/Thr protein kinase family. APG1/unc-51/ULK1 subfamily. As to quaternary structure, homodimer. Forms a ternary complex with ATG13 and ATG17.

It is found in the cytoplasm. The protein resides in the preautophagosomal structure membrane. It carries out the reaction L-seryl-[protein] + ATP = O-phospho-L-seryl-[protein] + ADP + H(+). The enzyme catalyses L-threonyl-[protein] + ATP = O-phospho-L-threonyl-[protein] + ADP + H(+). Serine/threonine protein kinase involved in the cytoplasm to vacuole transport (Cvt) and found to be essential in autophagy, where it is required for the formation of autophagosomes. Involved in the clearance of protein aggregates which cannot be efficiently cleared by the proteasome. Required for selective autophagic degradation of the nucleus (nucleophagy) as well as for mitophagy which contributes to regulate mitochondrial quantity and quality by eliminating the mitochondria to a basal level to fulfill cellular energy requirements and preventing excess ROS production. Also involved in endoplasmic reticulum-specific autophagic process, in selective removal of ER-associated degradation (ERAD) substrates. Plays a key role in ATG9 and ATG23 cycling through the pre-autophagosomal structure and is necessary to promote ATG18 binding to ATG9 through phosphorylation of ATG9. Catalyzes phosphorylation of ATG4, decreasing the interaction between ATG4 and ATG8 and impairing deconjugation of PE-conjugated forms of ATG8. The protein is Serine/threonine-protein kinase ATG1 of Debaryomyces hansenii (strain ATCC 36239 / CBS 767 / BCRC 21394 / JCM 1990 / NBRC 0083 / IGC 2968) (Yeast).